The chain runs to 257 residues: 3-methyl-2-oxobutanoate hydroxymethyltransferase (257 aa).

Mg(2+) is bound by residues D42 and D86. Residues 42–43 (DS), D86, and K116 contribute to the 3-methyl-2-oxobutanoate site. E118 contacts Mg(2+). Residue E185 is the Proton acceptor of the active site.

Belongs to the PanB family. In terms of assembly, homodecamer; pentamer of dimers. Mg(2+) is required as a cofactor.

It is found in the cytoplasm. The catalysed reaction is 3-methyl-2-oxobutanoate + (6R)-5,10-methylene-5,6,7,8-tetrahydrofolate + H2O = 2-dehydropantoate + (6S)-5,6,7,8-tetrahydrofolate. It functions in the pathway cofactor biosynthesis; (R)-pantothenate biosynthesis; (R)-pantoate from 3-methyl-2-oxobutanoate: step 1/2. In terms of biological role, catalyzes the reversible reaction in which hydroxymethyl group from 5,10-methylenetetrahydrofolate is transferred onto alpha-ketoisovalerate to form ketopantoate. This is 3-methyl-2-oxobutanoate hydroxymethyltransferase from Prochlorococcus marinus (strain MIT 9515).